Here is an 813-residue protein sequence, read N- to C-terminus: LPS-assembly protein LptD (813 aa).

Positions 1-22 are cleaved as a signal peptide; it reads MRRALRLLPLPLSIAICLPAMA.

This sequence belongs to the LptD family. Component of the lipopolysaccharide transport and assembly complex. Interacts with LptE and LptA.

It localises to the cell outer membrane. In terms of biological role, together with LptE, is involved in the assembly of lipopolysaccharide (LPS) at the surface of the outer membrane. The protein is LPS-assembly protein LptD of Xanthomonas axonopodis pv. citri (strain 306).